We begin with the raw amino-acid sequence, 664 residues long: MPLRDKYCQTDHHHHGCCEPVYILEPGDPPLLQQPLQTSKSGIQQIIECFRSGTKQLKHILLKDVDTIFECKLCRSLFRGLPNLITHKKFYCPPSLQMDDNLPDVNDKQSQAINDLLEAIYPSVDKREYIIKLEPIETNQNAVFQYISRTDNPIEVTESSSTPEQTEVQIQETSTEQSKTVPVTDTEVETVEPPPVEIVTDEVAPTSDEQPQESQADLETSDNSDFGHQLICCLCRKEFNSRRGVRRHIRKVHKKKMEELKKYIETRKNPNQSSKGRSKNVLVPLSRSCPVCCKSFATKANVRRHFDEVHRGLRRDSITPDIATKPGQPLFLDSISPKKSFKTRKQKSSSKAEYNLTACKCLLCKRKYSSQIMLKRHMQIVHKITLSGTNSKREKGPNNTANSSEIKVKVEPADSVESSPPSITHSPQNELKGTNHSNEKKNTPAAQKNKVKQDSESPKSTSPSAAGGQQKTRKPKLSAGFDFKQLYCKLCKRQFTSKQNLTKHIELHTDGNNIYVKFYKCPLCTYETRRKRDVIRHITVVHKKSSRYLGKITASLEIRAIKKPIDFVLNKVAKRGPSRDEAKHSDSKHDGTSNSPSKKYEVADVGIEVKVTKNFSLHRCNKCGKAFAKKTYLEHHKKTHKANASNSPEGNKTKGRSTRSKALV.

The C2H2-type 1; degenerate zinc-finger motif lies at Phe-69–Tyr-91. Lys-132 is covalently cross-linked (Glycyl lysine isopeptide (Lys-Gly) (interchain with G-Cter in SUMO2)). Polar residues-rich tracts occupy residues Ile-154–Lys-179 and Ser-207–Ser-224. A disordered region spans residues Ile-154 to Ser-224. The C2H2-type 2 zinc-finger motif lies at Leu-230 to His-253. Lys-279 is covalently cross-linked (Glycyl lysine isopeptide (Lys-Gly) (interchain with G-Cter in SUMO2)). The segment at Arg-287–His-310 adopts a C2H2-type 3 zinc-finger fold. Phosphoserine is present on Ser-317. Thr-319 is subject to Phosphothreonine. The tract at residues Gln-328–Ser-349 is disordered. The residue at position 336 (Ser-336) is a Phosphoserine. Positions Lys-339–Ser-348 are enriched in basic residues. The segment at Thr-357–His-382 adopts a C2H2-type 4 zinc-finger fold. Residues Gly-388 to Lys-476 form a disordered region. Lys-392 is covalently cross-linked (Glycyl lysine isopeptide (Lys-Gly) (interchain with G-Cter in SUMO2)). Residue Lys-409 forms a Glycyl lysine isopeptide (Lys-Gly) (interchain with G-Cter in SUMO1); alternate linkage. Lys-409 participates in a covalent cross-link: Glycyl lysine isopeptide (Lys-Gly) (interchain with G-Cter in SUMO2); alternate. Residues Val-416 to His-436 show a composition bias toward polar residues. Phosphoserine occurs at positions 422, 426, 455, 457, 460, and 462. The segment covering Pro-458–Gln-470 has biased composition (polar residues). A Glycyl lysine isopeptide (Lys-Gly) (interchain with G-Cter in SUMO2) cross-link involves residue Lys-476. 2 consecutive C2H2-type zinc fingers follow at residues Leu-486–His-508 and Tyr-519–His-542. Disordered stretches follow at residues Lys-574–Lys-599 and His-635–Val-664. The span at Pro-577–Gly-591 shows a compositional bias: basic and acidic residues. Residue Lys-599 forms a Glycyl lysine isopeptide (Lys-Gly) (interchain with G-Cter in SUMO2) linkage. The C2H2-type 7 zinc-finger motif lies at His-618 to His-640. Residues Thr-653–Val-664 are compositionally biased toward basic residues.

Belongs to the krueppel C2H2-type zinc-finger protein family.

It localises to the nucleus. In terms of biological role, may be involved in transcriptional regulation. In Homo sapiens (Human), this protein is Zinc finger protein 800 (ZNF800).